A 515-amino-acid polypeptide reads, in one-letter code: Fatty acyl-CoA reductase 1 (515 aa).

The Cytoplasmic segment spans residues 1-465 (MVSIPEYYEG…ARKHLNKLRN (465 aa)). A helical transmembrane segment spans residues 466–483 (IRYGFNTILVILIWRIFI). Over 484 to 515 (ARSQMARNIWYFVVSLCYKFLSYFRASSTMRY) the chain is Peroxisomal.

Belongs to the fatty acyl-CoA reductase family.

It is found in the peroxisome membrane. The enzyme catalyses a long-chain fatty acyl-CoA + 2 NADPH + 2 H(+) = a long-chain primary fatty alcohol + 2 NADP(+) + CoA. It carries out the reaction hexadecanoyl-CoA + 2 NADPH + 2 H(+) = hexadecan-1-ol + 2 NADP(+) + CoA. It catalyses the reaction octadecanoyl-CoA + 2 NADPH + 2 H(+) = octadecan-1-ol + 2 NADP(+) + CoA. The catalysed reaction is (9Z)-octadecenoyl-CoA + 2 NADPH + 2 H(+) = (9Z)-octadecen-1-ol + 2 NADP(+) + CoA. The enzyme catalyses (9Z,12Z)-octadecadienoyl-CoA + 2 NADPH + 2 H(+) = (9Z,12Z)-octadecadien-1-ol + 2 NADP(+) + CoA. It carries out the reaction eicosanoyl-CoA + 2 NADPH + 2 H(+) = eicosan-1-ol + 2 NADP(+) + CoA. It catalyses the reaction 16-methylheptadecanoyl-CoA + 2 NADPH + 2 H(+) = 16-methylheptadecan-1-ol + 2 NADP(+) + CoA. The catalysed reaction is 18-methylnonadecanoyl-CoA + 2 NADPH + 2 H(+) = 18-methylnonadecan-1-ol + 2 NADP(+) + CoA. Catalyzes the reduction of saturated and unsaturated C16 or C18 fatty acyl-CoA to fatty alcohols. It plays an essential role in the production of ether lipids/plasmalogens which synthesis requires fatty alcohols. In parallel, it is also required for wax monoesters production since fatty alcohols also constitute a substrate for their synthesis. The protein is Fatty acyl-CoA reductase 1 of Gallus gallus (Chicken).